The following is a 423-amino-acid chain: Putative competence-damage inducible protein (423 aa).

The protein belongs to the CinA family.

The polypeptide is Putative competence-damage inducible protein (Streptococcus equi subsp. equi (strain 4047)).